A 279-amino-acid chain; its full sequence is Osmoprotective compounds uptake permease protein GgtC (279 aa).

A run of 7 helical transmembrane segments spans residues 7–27 (LLFLSAYLILPTLETVYLSFF), 58–78 (LWLVLVTGISVSLGLIIAVLV), 90–110 (IIFLPMAISFVGASVIWKFVY), 120–140 (IGLLNAIVTSLGFAPVGWLVE), 146–166 (FALIAIMIWLYTGFCMVILSA), 202–222 (LLVVSTTMVILVLKVFDIVFV), and 247–267 (FGRGSTIAVILLLLIVPVMIT). Residues 53-270 (FRNNLLWLVL…IVPVMITNIR (218 aa)) form the ABC transmembrane type-1 domain.

This sequence belongs to the binding-protein-dependent transport system permease family. In terms of assembly, the complex is composed of two ATP-binding proteins (GgtA), two transmembrane proteins (GgtC and GgtD) and a solute-binding protein (GgtB).

Its subcellular location is the cell membrane. Functionally, part of the ABC transporter complex GgtABCD involved in the uptake of the osmoprotective compounds glucosylglycerol (GG), sucrose and trehalose. Responsible for the translocation of the substrate across the membrane. This chain is Osmoprotective compounds uptake permease protein GgtC, found in Synechocystis sp. (strain ATCC 27184 / PCC 6803 / Kazusa).